A 404-amino-acid polypeptide reads, in one-letter code: Homocysteine-responsive endoplasmic reticulum-resident ubiquitin-like domain member 2 protein (404 aa).

The Ubiquitin-like domain maps to 10 to 89 (VTLIIKAPNQ…HMVHLVCASR (80 aa)). The tract at residues 86-153 (CASRSPPSSP…TLSQAQTDPA (68 aa)) is disordered. Composition is skewed to low complexity over residues 88-97 (SRSPPSSPKS) and 109-126 (SSTS…PSPS). Residues 127–153 (QESLSLVTGSSEGLRQRTLSQAQTDPA) are compositionally biased toward polar residues. The chain crosses the membrane as a helical span at residues 301–321 (FIMVMGAMLLVYLHQAGWFPF).

The protein resides in the membrane. Functionally, could be involved in the unfolded protein response (UPR) pathway. This chain is Homocysteine-responsive endoplasmic reticulum-resident ubiquitin-like domain member 2 protein (Herpud2), found in Mus musculus (Mouse).